The sequence spans 219 residues: Elongation factor Ts (219 aa).

The segment at 81-84 is involved in Mg(2+) ion dislocation from EF-Tu; sequence SDFV.

This sequence belongs to the EF-Ts family.

Its subcellular location is the cytoplasm. Associates with the EF-Tu.GDP complex and induces the exchange of GDP to GTP. It remains bound to the aminoacyl-tRNA.EF-Tu.GTP complex up to the GTP hydrolysis stage on the ribosome. The protein is Elongation factor Ts of Koribacter versatilis (strain Ellin345).